The following is a 30-amino-acid chain: Cyclotide hyen-L (30 aa).

The segment at residues 1–30 (GIPCAESCVYIPCTVTALLGCSCSDKVCYN) is a cross-link (cyclopeptide (Gly-Asn)). 3 cysteine pairs are disulfide-bonded: cysteine 4-cysteine 21, cysteine 8-cysteine 23, and cysteine 13-cysteine 28.

This is a cyclic peptide. Detected in stems (at protein level).

Probably participates in a plant defense mechanism. Has cytotoxic activity against HUVEC cells (LC(50)= 2.26 uM) and various cancer cells including HeLa (LC(50)= 3.48 uM), MCF-7 and K562. Displays very weak hemolytic activity. Binds to and induces leakage in phospholipd membranes, particularly ones containing 1-palmitoyl-2-oleophosphatidylethanolamine (POPE). This chain is Cyclotide hyen-L, found in Pigea enneasperma (Spade flower).